Consider the following 450-residue polypeptide: Bifunctional protein GlmU (450 aa).

A pyrophosphorylase region spans residues 1 to 229 (MGVALIVLAA…EAETLGINTR (229 aa)). Residues 8–11 (LAAG), Lys22, Gln75, 80–81 (GT), 103–105 (YGD), Gly141, Glu155, Asn170, and Asn227 each bind UDP-N-acetyl-alpha-D-glucosamine. Asp105 contacts Mg(2+). Asn227 serves as a coordination point for Mg(2+). Residues 230–250 (TELAAAEQAFQARARARALED) are linker. Residues 251 to 450 (GVTLADPATT…RARKSAKGAQ (200 aa)) form an N-acetyltransferase region. UDP-N-acetyl-alpha-D-glucosamine is bound by residues Arg316 and Lys334. His346 acts as the Proton acceptor in catalysis. UDP-N-acetyl-alpha-D-glucosamine is bound by residues Tyr349 and Asn360. Residues Ala363, 369–370 (NY), Ser388, Thr406, and Arg423 contribute to the acetyl-CoA site.

The protein in the N-terminal section; belongs to the N-acetylglucosamine-1-phosphate uridyltransferase family. This sequence in the C-terminal section; belongs to the transferase hexapeptide repeat family. Homotrimer. Mg(2+) is required as a cofactor.

The protein resides in the cytoplasm. It carries out the reaction alpha-D-glucosamine 1-phosphate + acetyl-CoA = N-acetyl-alpha-D-glucosamine 1-phosphate + CoA + H(+). The catalysed reaction is N-acetyl-alpha-D-glucosamine 1-phosphate + UTP + H(+) = UDP-N-acetyl-alpha-D-glucosamine + diphosphate. The protein operates within nucleotide-sugar biosynthesis; UDP-N-acetyl-alpha-D-glucosamine biosynthesis; N-acetyl-alpha-D-glucosamine 1-phosphate from alpha-D-glucosamine 6-phosphate (route II): step 2/2. It functions in the pathway nucleotide-sugar biosynthesis; UDP-N-acetyl-alpha-D-glucosamine biosynthesis; UDP-N-acetyl-alpha-D-glucosamine from N-acetyl-alpha-D-glucosamine 1-phosphate: step 1/1. It participates in bacterial outer membrane biogenesis; LPS lipid A biosynthesis. Catalyzes the last two sequential reactions in the de novo biosynthetic pathway for UDP-N-acetylglucosamine (UDP-GlcNAc). The C-terminal domain catalyzes the transfer of acetyl group from acetyl coenzyme A to glucosamine-1-phosphate (GlcN-1-P) to produce N-acetylglucosamine-1-phosphate (GlcNAc-1-P), which is converted into UDP-GlcNAc by the transfer of uridine 5-monophosphate (from uridine 5-triphosphate), a reaction catalyzed by the N-terminal domain. The sequence is that of Bifunctional protein GlmU from Dinoroseobacter shibae (strain DSM 16493 / NCIMB 14021 / DFL 12).